Consider the following 360-residue polypeptide: C-C chemokine receptor type 2 (360 aa).

At 1-42 the chain is on the extracellular side; the sequence is MLSTSRSRFIRNTNGSGEEVTTFFDYDYGAPCHKFDVKQIGA. N-linked (GlcNAc...) asparagine glycosylation is present at asparagine 14. Tyrosine 26 bears the Sulfotyrosine mark. Residues 43-70 traverse the membrane as a helical segment; sequence QLLPPLYSLVFIFGFVGNMLVVLILINC. The Cytoplasmic portion of the chain corresponds to 71–80; sequence KKLKSLTDIY. The helical transmembrane segment at 81–100 threads the bilayer; sequence LLNLAISDLLFLITLPLWAH. Topologically, residues 101–114 are extracellular; the sequence is SAANEWVFGNAMCK. A disulfide bond links cysteine 113 and cysteine 190. Residues 115–136 form a helical membrane-spanning segment; the sequence is LFTGLYHIGYLGGIFFIILLTI. At 137 to 153 the chain is on the cytoplasmic side; sequence DRYLAIVHAVFALKART. Tyrosine 139 carries the phosphotyrosine; by JAK2 modification. The chain crosses the membrane as a helical span at residues 154–178; it reads VTFGVVTSVITWLVAVFASVPGIIF. The Extracellular portion of the chain corresponds to 179 to 206; it reads TKCQEEDSVYICGPYFPRGWNNFHTIMR. Residues 207–226 form a helical membrane-spanning segment; sequence NILGLVLPLLIMVICYSGIL. At 227-243 the chain is on the cytoplasmic side; sequence KTLLRCRNEKKRHRAVR. The chain crosses the membrane as a helical span at residues 244–268; it reads LIFTIMIVYFLFWTPYNIVILLNTF. Residues 269-285 lie on the Extracellular side of the membrane; sequence QEFFGLSNCESTRQLDQ. Residues 286-309 form a helical membrane-spanning segment; the sequence is ATQVTETLGMTHCCINPIIYAFVG. Residues 310–360 lie on the Cytoplasmic side of the membrane; that stretch reads EKFRRYLSMFFRKYITKRFCKQCPVFYRETVDGVTSTNTPSTAEQEVSVGL.

This sequence belongs to the G-protein coupled receptor 1 family. In terms of assembly, interacts with ARRB1. Interacts (via extracellular N-terminal region) with beta-defensin DEFB106A/DEFB106B; this interaction may preferentially require specific tyrosine sulfation on CCR2. Interacts with NUP85; the interaction is required for CCR2 clusters formation on the cell membrane and CCR2 signaling. N-glycosylated. Post-translationally, sulfation increases the affinity for both monomeric and dimeric CCL2 with stronger binding to the monomeric form. Binding of sulfated CCR2 to CCL2 promotes conversion of CCL2 from dimer to monomer.

Its subcellular location is the cell membrane. Functionally, key functional receptor for CCL2 but can also bind CCL7 and CCL12. Its binding with CCL2 on monocytes and macrophages mediates chemotaxis and migration induction through the activation of the PI3K cascade, the small G protein Rac and lamellipodium protrusion. Also acts as a receptor for the beta-defensin DEFB106A/DEFB106B. Regulates the expression of T-cell inflammatory cytokines and T-cell differentiation, promoting the differentiation of T-cells into T-helper 17 cells (Th17) during inflammation. Facilitates the export of mature thymocytes by enhancing directional movement of thymocytes to sphingosine-1-phosphate stimulation and up-regulation of S1P1R expression; signals through the JAK-STAT pathway to regulate FOXO1 activity leading to an increased expression of S1P1R. Plays an important role in mediating peripheral nerve injury-induced neuropathic pain. Increases NMDA-mediated synaptic transmission in both dopamine D1 and D2 receptor-containing neurons, which may be caused by MAPK/ERK-dependent phosphorylation of GRIN2B/NMDAR2B. Mediates the recruitment of macrophages and monocytes to the injury site following brain injury. The chain is C-C chemokine receptor type 2 (CCR2) from Macaca mulatta (Rhesus macaque).